The sequence spans 232 residues: ATP-dependent dethiobiotin synthetase BioD (232 aa).

Position 16 to 21 (16 to 21 (GVGKTV)) interacts with ATP. Residue Thr20 coordinates Mg(2+). Residue Lys41 is part of the active site. Thr45 contributes to the substrate binding site. ATP is bound by residues Asp52, 111–114 (EGIG), 171–172 (NQ), 200–202 (PLS), and Glu207. Asp52 and Glu111 together coordinate Mg(2+).

This sequence belongs to the dethiobiotin synthetase family. In terms of assembly, homodimer. Mg(2+) is required as a cofactor.

It is found in the cytoplasm. It catalyses the reaction (7R,8S)-7,8-diammoniononanoate + CO2 + ATP = (4R,5S)-dethiobiotin + ADP + phosphate + 3 H(+). The catalysed reaction is (7R,8S)-8-amino-7-(carboxyamino)nonanoate + ATP = (4R,5S)-dethiobiotin + ADP + phosphate + H(+). It participates in cofactor biosynthesis; biotin biosynthesis; biotin from 7,8-diaminononanoate: step 1/2. In terms of biological role, catalyzes a mechanistically unusual reaction, the ATP-dependent insertion of CO2 between the N7 and N8 nitrogen atoms of 7,8-diaminopelargonic acid (DAPA, also called 7,8-diammoniononanoate) to form a ureido ring. This archaea does not encode bioA (which catalyzes the formation of the precursor for this reaction in the cannonical pathway), instead it encodes bioU, which replaces bioA and also performs the first half of the cannonical BioD reaction. Thus in this archaea BioD has a different substrate. This chain is ATP-dependent dethiobiotin synthetase BioD, found in Haloferax mediterranei (strain ATCC 33500 / DSM 1411 / JCM 8866 / NBRC 14739 / NCIMB 2177 / R-4) (Halobacterium mediterranei).